A 28-amino-acid chain; its full sequence is 14-3-3-like protein 4 (28 aa).

The protein belongs to the 14-3-3 family.

The chain is 14-3-3-like protein 4 from Pseudotsuga menziesii (Douglas-fir).